The sequence spans 236 residues: Small ribosomal subunit protein uS2c (236 aa).

This sequence belongs to the universal ribosomal protein uS2 family.

The protein resides in the plastid. The protein localises to the chloroplast. This chain is Small ribosomal subunit protein uS2c (rps2), found in Pisum sativum (Garden pea).